The sequence spans 321 residues: Lipoyl synthase (321 aa).

Residues Cys-68, Cys-73, Cys-79, Cys-94, Cys-98, Cys-101, and Ser-308 each coordinate [4Fe-4S] cluster. A Radical SAM core domain is found at 80–297 (FNHGTATFMI…KAEAMAMGFT (218 aa)).

It belongs to the radical SAM superfamily. Lipoyl synthase family. [4Fe-4S] cluster is required as a cofactor.

The protein resides in the cytoplasm. It carries out the reaction [[Fe-S] cluster scaffold protein carrying a second [4Fe-4S](2+) cluster] + N(6)-octanoyl-L-lysyl-[protein] + 2 oxidized [2Fe-2S]-[ferredoxin] + 2 S-adenosyl-L-methionine + 4 H(+) = [[Fe-S] cluster scaffold protein] + N(6)-[(R)-dihydrolipoyl]-L-lysyl-[protein] + 4 Fe(3+) + 2 hydrogen sulfide + 2 5'-deoxyadenosine + 2 L-methionine + 2 reduced [2Fe-2S]-[ferredoxin]. Its pathway is protein modification; protein lipoylation via endogenous pathway; protein N(6)-(lipoyl)lysine from octanoyl-[acyl-carrier-protein]: step 2/2. In terms of biological role, catalyzes the radical-mediated insertion of two sulfur atoms into the C-6 and C-8 positions of the octanoyl moiety bound to the lipoyl domains of lipoate-dependent enzymes, thereby converting the octanoylated domains into lipoylated derivatives. This is Lipoyl synthase from Yersinia enterocolitica serotype O:8 / biotype 1B (strain NCTC 13174 / 8081).